Here is a 321-residue protein sequence, read N- to C-terminus: Probable NAD(P)H-dependent D-xylose reductase xyl1 (321 aa).

The active-site Proton donor is the Tyr50. His112 lines the substrate pocket. Residues 166 to 167, 215 to 224, and 271 to 281 contribute to the NAD(+) site; these read SN, SSFGPLSFVE, and KSNDPTRLAQN.

Belongs to the aldo/keto reductase family.

The catalysed reaction is xylitol + NAD(+) = D-xylose + NADH + H(+). It carries out the reaction xylitol + NADP(+) = D-xylose + NADPH + H(+). It functions in the pathway carbohydrate metabolism; D-xylose degradation. Its function is as follows. Catalyzes the initial reaction in the xylose utilization pathway by reducing D-xylose into xylitol. Xylose is a major component of hemicelluloses such as xylan. Most fungi utilize D-xylose via three enzymatic reactions, xylose reductase (XR), xylitol dehydrogenase (XDH), and xylulokinase, to form xylulose 5-phosphate, which enters pentose phosphate pathway. The sequence is that of Probable NAD(P)H-dependent D-xylose reductase xyl1 (xyl1) from Neosartorya fischeri (strain ATCC 1020 / DSM 3700 / CBS 544.65 / FGSC A1164 / JCM 1740 / NRRL 181 / WB 181) (Aspergillus fischerianus).